A 162-amino-acid chain; its full sequence is ATP synthase subunit b (162 aa).

The chain crosses the membrane as a helical span at residues 16–36; the sequence is GISGGTIIYQLLMFIILLALL.

This sequence belongs to the ATPase B chain family. In terms of assembly, F-type ATPases have 2 components, F(1) - the catalytic core - and F(0) - the membrane proton channel. F(1) has five subunits: alpha(3), beta(3), gamma(1), delta(1), epsilon(1). F(0) has three main subunits: a(1), b(2) and c(10-14). The alpha and beta chains form an alternating ring which encloses part of the gamma chain. F(1) is attached to F(0) by a central stalk formed by the gamma and epsilon chains, while a peripheral stalk is formed by the delta and b chains.

It localises to the cell membrane. In terms of biological role, f(1)F(0) ATP synthase produces ATP from ADP in the presence of a proton or sodium gradient. F-type ATPases consist of two structural domains, F(1) containing the extramembraneous catalytic core and F(0) containing the membrane proton channel, linked together by a central stalk and a peripheral stalk. During catalysis, ATP synthesis in the catalytic domain of F(1) is coupled via a rotary mechanism of the central stalk subunits to proton translocation. Component of the F(0) channel, it forms part of the peripheral stalk, linking F(1) to F(0). This chain is ATP synthase subunit b, found in Bacillus caldotenax.